Consider the following 160-residue polypeptide: Transcription antitermination protein NusB (160 aa).

It belongs to the NusB family.

Functionally, involved in transcription antitermination. Required for transcription of ribosomal RNA (rRNA) genes. Binds specifically to the boxA antiterminator sequence of the ribosomal RNA (rrn) operons. The protein is Transcription antitermination protein NusB of Maricaulis maris (strain MCS10) (Caulobacter maris).